The primary structure comprises 77 residues: Cysteine-rich protein 1 (77 aa).

In terms of domain architecture, LIM zinc-binding spans 2–63; the sequence is PKCPKCDKEV…HPCYSAMFGP (62 aa). 2 positions are modified to N6-acetyllysine: lysine 9 and lysine 22. An Omega-N-methylarginine modification is found at arginine 68.

In terms of biological role, seems to have a role in zinc absorption and may function as an intracellular zinc transport protein. The protein is Cysteine-rich protein 1 (Crip1) of Mus musculus (Mouse).